Consider the following 376-residue polypeptide: Alanine racemase (376 aa).

The active-site Proton acceptor; specific for D-alanine is K40. Position 40 is an N6-(pyridoxal phosphate)lysine (K40). A substrate-binding site is contributed by R138. Y270 serves as the catalytic Proton acceptor; specific for L-alanine. M317 provides a ligand contact to substrate.

The protein belongs to the alanine racemase family. Pyridoxal 5'-phosphate serves as cofactor.

It catalyses the reaction L-alanine = D-alanine. Its pathway is amino-acid biosynthesis; D-alanine biosynthesis; D-alanine from L-alanine: step 1/1. Functionally, catalyzes the interconversion of L-alanine and D-alanine. May also act on other amino acids. The chain is Alanine racemase (alr) from Lactobacillus acidophilus (strain ATCC 700396 / NCK56 / N2 / NCFM).